We begin with the raw amino-acid sequence, 121 residues long: Large ribosomal subunit protein bL20 (121 aa).

The protein belongs to the bacterial ribosomal protein bL20 family.

Binds directly to 23S ribosomal RNA and is necessary for the in vitro assembly process of the 50S ribosomal subunit. It is not involved in the protein synthesizing functions of that subunit. This chain is Large ribosomal subunit protein bL20, found in Chlamydia caviae (strain ATCC VR-813 / DSM 19441 / 03DC25 / GPIC) (Chlamydophila caviae).